The sequence spans 277 residues: Digeranylgeranylglyceryl phosphate synthase (277 aa).

Helical transmembrane passes span 13–33, 40–60, 89–109, 143–163, 199–219, 220–240, and 256–276; these read PGNA…AGGL, AFAV…NDYF, VALF…AIAI, FLYG…LFAL, RSLY…PLPY, LLGL…CGLA, and WLKA…LAVV.

It belongs to the UbiA prenyltransferase family. DGGGP synthase subfamily. It depends on Mg(2+) as a cofactor.

It is found in the cell membrane. It carries out the reaction sn-3-O-(geranylgeranyl)glycerol 1-phosphate + (2E,6E,10E)-geranylgeranyl diphosphate = 2,3-bis-O-(geranylgeranyl)-sn-glycerol 1-phosphate + diphosphate. It functions in the pathway membrane lipid metabolism; glycerophospholipid metabolism. Functionally, prenyltransferase that catalyzes the transfer of the geranylgeranyl moiety of geranylgeranyl diphosphate (GGPP) to the C2 hydroxyl of (S)-3-O-geranylgeranylglyceryl phosphate (GGGP). This reaction is the second ether-bond-formation step in the biosynthesis of archaeal membrane lipids. The sequence is that of Digeranylgeranylglyceryl phosphate synthase from Natronomonas pharaonis (strain ATCC 35678 / DSM 2160 / CIP 103997 / JCM 8858 / NBRC 14720 / NCIMB 2260 / Gabara) (Halobacterium pharaonis).